Reading from the N-terminus, the 67-residue chain is uncharacterized protein (67 aa).

Transmembrane regions (helical) follow at residues 10–30 (EFFI…IIMW) and 40–60 (LMVG…WMVF).

The protein belongs to the plectrovirus ORF10 family.

The protein localises to the host membrane. This is an uncharacterized protein from Spiroplasma melliferum (SpV1).